A 51-amino-acid chain; its full sequence is Large ribosomal subunit protein bL33 (51 aa).

Belongs to the bacterial ribosomal protein bL33 family.

The protein is Large ribosomal subunit protein bL33 of Acidithiobacillus ferrooxidans (strain ATCC 53993 / BNL-5-31) (Leptospirillum ferrooxidans (ATCC 53993)).